Here is a 363-residue protein sequence, read N- to C-terminus: MSTTFQTPSRLPTVSAWDQFCEWITSTHNRLYVGWFGLLMIPSLFVSAITFMLAWVAAPSVDMEGIREPIISSLLGGSNVITAAVIPTSAAIGLHLYPLWEATSMDEWLYNGGPYQLIILHFLIAIWTYLGRQWELSYRLGMRPWIAMAFSAPVAAATAVLLVYPMGQGSFSEGLPLGISGTFHFMMAVQAEHNILMHPFHMLGVVGVFGGAFLSAMHGSLVTSSLVQETSSLKSVNTGYKFGQQEATYNLLAGHAGYLGRLFIPDIAFRNSRSIHFLLAVLPTIGIWFAALGIGTMAFNLNGFNFNHSLLDSSGRPIRTEADLLNRATMGLQVMHSVNAHHFSLTLASTESKEIPTIPIMTS.

3 consecutive transmembrane segments (helical) span residues 32–49 (YVGWFGLLMIPSLFVSAI), 121–136 (HFLIAIWTYLGRQWEL), and 145–159 (WIAMAFSAPVAAATA). H121 serves as a coordination point for chlorophyll a. Y129 serves as a coordination point for pheophytin a. The [CaMn4O5] cluster site is built by E173 and E192. Residues 200–221 (FHMLGVVGVFGGAFLSAMHGSL) traverse the membrane as a helical segment. H201 contacts chlorophyll a. Residues H218 and 268–269 (AF) each bind a quinone. A Fe cation-binding site is contributed by H218. H276 is a Fe cation binding site. Residues 278 to 292 (LLAVLPTIGIWFAAL) traverse the membrane as a helical segment. H336 and A348 together coordinate [CaMn4O5] cluster. A propeptide spanning residues 349–363 (STESKEIPTIPIMTS) is cleaved from the precursor.

Belongs to the reaction center PufL/M/PsbA/D family. PSII is composed of 1 copy each of membrane proteins PsbA, PsbB, PsbC, PsbD, PsbE, PsbF, PsbH, PsbI, PsbJ, PsbK, PsbL, PsbM, PsbT, PsbX, PsbY, PsbZ, Psb30/Ycf12, peripheral proteins PsbO, CyanoQ (PsbQ), PsbU, PsbV and a large number of cofactors. It forms dimeric complexes. Requires The D1/D2 heterodimer binds P680, chlorophylls that are the primary electron donor of PSII, and subsequent electron acceptors. It shares a non-heme iron and each subunit binds pheophytin, quinone, additional chlorophylls, carotenoids and lipids. D1 provides most of the ligands for the Mn4-Ca-O5 cluster of the oxygen-evolving complex (OEC). There is also a Cl(-1) ion associated with D1 and D2, which is required for oxygen evolution. The PSII complex binds additional chlorophylls, carotenoids and specific lipids. as cofactor. Tyr-164 forms a radical intermediate that is referred to as redox-active TyrZ, YZ or Y-Z. Post-translationally, C-terminally processed by CtpA; processing is essential to allow assembly of the oxygen-evolving complex and thus photosynthetic growth.

It is found in the cellular thylakoid membrane. The catalysed reaction is 2 a plastoquinone + 4 hnu + 2 H2O = 2 a plastoquinol + O2. Photosystem II (PSII) is a light-driven water:plastoquinone oxidoreductase that uses light energy to abstract electrons from H(2)O, generating O(2) and a proton gradient subsequently used for ATP formation. It consists of a core antenna complex that captures photons, and an electron transfer chain that converts photonic excitation into a charge separation. The D1/D2 (PsbA/PsbD) reaction center heterodimer binds P680, the primary electron donor of PSII as well as several subsequent electron acceptors. The sequence is that of Photosystem II protein D1 1 from Acaryochloris marina (strain MBIC 11017).